The primary structure comprises 315 residues: Beta-carotene hydroxylase 1, chloroplastic (315 aa).

Residues 1 to 58 (MAAEISISASSRAICLQRNPFPAPKYFATAPPLLFFSPLTCNLDAILRSRRKPRLAAC) constitute a chloroplast transit peptide. The next 2 helical transmembrane spans lie at 112–132 (YLVA…ISVY) and 146–166 (FSEM…MEYW). The 128-residue stretch at 159–286 (AAIGMEYWAR…KFDGVPYGLF (128 aa)) folds into the Fatty acid hydroxylase domain. The Histidine box-1 motif lies at 171–176 (HRALWH). The Histidine box-2 motif lies at 183 to 187 (HESHH). Transmembrane regions (helical) follow at residues 196–216 (LNDI…SFGF) and 222–242 (IPGL…AYMF). The Histidine box-3 signature appears at 244-249 (HDGLVH). The Histidine box-4 motif lies at 270 to 274 (HQLHH).

This sequence belongs to the sterol desaturase family.

Its subcellular location is the plastid. It is found in the chloroplast membrane. The catalysed reaction is all-trans-beta-carotene + 4 reduced [2Fe-2S]-[ferredoxin] + 2 O2 + 4 H(+) = all-trans-zeaxanthin + 4 oxidized [2Fe-2S]-[ferredoxin] + 2 H2O. It catalyses the reaction all-trans-beta-carotene + 2 reduced [2Fe-2S]-[ferredoxin] + O2 + 2 H(+) = beta-cryptoxanthin + 2 oxidized [2Fe-2S]-[ferredoxin] + H2O. It carries out the reaction beta-cryptoxanthin + 2 reduced [2Fe-2S]-[ferredoxin] + O2 + 2 H(+) = all-trans-zeaxanthin + 2 oxidized [2Fe-2S]-[ferredoxin] + H2O. Inhibited by o-phenanthroline and 8-hydroxyquinoline. In terms of biological role, nonheme diiron monooxygenase involved in the biosynthesis of xanthophylls. Specific for beta-ring hydroxylations of beta-carotene. Produces beta-cryptoxanthin and zeaxanthin. Uses ferredoxin as an electron donor. The sequence is that of Beta-carotene hydroxylase 1, chloroplastic from Capsicum annuum (Capsicum pepper).